The sequence spans 65 residues: Toxin Co52 (65 aa).

Residues 2–65 (EDGYLVDKTG…PTWPLPNKTC (64 aa)) enclose the LCN-type CS-alpha/beta domain. 4 cysteine pairs are disulfide-bonded: Cys12/Cys65, Cys16/Cys41, Cys25/Cys46, and Cys29/Cys48.

In terms of tissue distribution, expressed by the venom gland.

The protein resides in the secreted. Beta toxins bind voltage-independently at site-4 of sodium channels (Nav) and shift the voltage of activation toward more negative potentials thereby affecting sodium channel activation and promoting spontaneous and repetitive firing. Not toxic to mice, chicks, crickets or woodlice (at 5 ug). The polypeptide is Toxin Co52 (Centruroides ornatus (Scorpion)).